The chain runs to 363 residues: RNA polymerase II holoenzyme cyclin-like subunit (363 aa).

Residues 53 to 143 (YQMLRLAKNL…IGECEFWLIS (91 aa)) enclose the Cyclin N-terminal domain. A disordered region spans residues 252-312 (TPGGSGSPAM…SPQKEKSKLQ (61 aa)). A compositionally biased stretch (polar residues) spans 265 to 276 (IQQNPPNQAYQL). Positions 277–298 (TPQQQEMFRQQQMQQQNRQPET) are enriched in low complexity. Residues 299–310 (QAKDSPQKEKSK) show a composition bias toward basic and acidic residues.

This sequence belongs to the cyclin family. Cyclin C subfamily. Component of the SRB8-11 complex, a regulatory module of the Mediator complex.

The protein resides in the nucleus. Its function is as follows. Component of the SRB8-11 complex. The SRB8-11 complex is a regulatory module of the Mediator complex which is itself involved in regulation of basal and activated RNA polymerase II-dependent transcription. The SRB8-11 complex may be involved in the transcriptional repression of a subset of genes regulated by Mediator. It may inhibit the association of the Mediator complex with RNA polymerase II to form the holoenzyme complex. The SRB8-11 complex phosphorylates the C-terminal domain (CTD) of the largest subunit of RNA polymerase II. The sequence is that of RNA polymerase II holoenzyme cyclin-like subunit (SSN8) from Pyricularia oryzae (strain 70-15 / ATCC MYA-4617 / FGSC 8958) (Rice blast fungus).